The primary structure comprises 340 residues: Replication factor C subunit 2 (340 aa).

59–66 (GSPGTGKT) provides a ligand contact to ATP.

Belongs to the activator 1 small subunits family. Heteropentamer of subunits rfc1, rfc2, rfc3, rfc4 and rfc5 that forms a complex (RFC) with PCNA in the presence of ATP. Two other complexes exist where rfc1 can be replaced by either ctf18 or elg1 to form the ctf18-RFC or the elg1-RFC complexes respectively.

The protein resides in the nucleus. In terms of biological role, the elongation of primed DNA templates by DNA polymerase delta and epsilon requires the action of the accessory proteins PCNA and activator 1. Subunit 2 binds ATP and single-stranded DNA. This Schizosaccharomyces pombe (strain 972 / ATCC 24843) (Fission yeast) protein is Replication factor C subunit 2 (rfc2).